Consider the following 102-residue polypeptide: Small ribosomal subunit protein uS10 (102 aa).

Belongs to the universal ribosomal protein uS10 family. Part of the 30S ribosomal subunit.

Its function is as follows. Involved in the binding of tRNA to the ribosomes. The protein is Small ribosomal subunit protein uS10 of Methylobacterium nodulans (strain LMG 21967 / CNCM I-2342 / ORS 2060).